Consider the following 630-residue polypeptide: Probable potassium transport system protein Kup (630 aa).

The next 12 membrane-spanning stretches (helical) occupy residues 17 to 37, 51 to 71, 105 to 125, 144 to 164, 175 to 195, 218 to 238, 255 to 275, 283 to 303, 344 to 364, 374 to 394, 402 to 422, and 428 to 448; these read LAIA…LYSL, PSAI…VVGI, ITGL…GDAV, PQLS…LFWI, LFGP…VYHI, VLLA…AEAL, YVLV…LLLL, PFFL…STVA, IYVP…VIGF, YGIA…VVMV, LLVA…FGAN, and QGGW…MTWY.

It belongs to the HAK/KUP transporter (TC 2.A.72) family.

It localises to the cell inner membrane. The catalysed reaction is K(+)(in) + H(+)(in) = K(+)(out) + H(+)(out). In terms of biological role, transport of potassium into the cell. Likely operates as a K(+):H(+) symporter. This chain is Probable potassium transport system protein Kup, found in Burkholderia thailandensis (strain ATCC 700388 / DSM 13276 / CCUG 48851 / CIP 106301 / E264).